The following is a 513-amino-acid chain: Maturase K (513 aa).

It belongs to the intron maturase 2 family. MatK subfamily.

It localises to the plastid. The protein localises to the chloroplast. Functionally, usually encoded in the trnK tRNA gene intron. Probably assists in splicing its own and other chloroplast group II introns. This Arundo donax (Giant reed) protein is Maturase K.